The sequence spans 998 residues: MAAGRPGTGCGDHPLLRLSGIPADFLERRPAGPGAGAGAGEAAVRRAGLPGRGGGAGQLAALPARRRRRTGRPDTGLPHARARSRPGVFRRAGAARGGGDLLQPPAAGAHPIPRRPRRLSRRAVVRRKLRGGLRPLRRPPRQRRMGFRQPTELRQAGAPAHRLHRPRTTHRHAVRRAPGRRREHPCAARTADGGLPAGGGLAALAAGGEDGRDRPGPAWLSRRRQHPALAGRQRARLSAPRRQPRGRLVSGHGGVLARRLLWRVLLFSLCFTVLAGAVQLFFEYRREMREIEARLELIRSGYLASFERSLWDLNQEQLNVQLRGLGDFPDIARVSLQSADFNLLQGDQRPRGMLRVERFPLSYQPPGGERRQLGELEIAIDLAAVYRRLVSGGLASLLWMGSFLCGLAVALSWLFHSLVTRHLWRMSEFAGHIAEGDLQQPLRLDKVDRERDEIDAVAAALEDMRQALRTDRRRRDADRDELRRQVERRTASLRRAKDQAEAADRAKSRFLATMSHEIRTPLNGILGMAELLREASLGERDRQRLRALATAGEGLLAILNEVLHFARLEEAPDVPEAVDFSLRSLLEDVLTLLEPRARENATRLDLWLDPQVHDGHRGAEQFLRQVLTNLLGNAVKFTEAGEVRVRVERLARSAGSERLRLSVADDGIGIPEEMRERIFERFTQGGDAVTRRYGGTGLGLAISKRLVEALGGRIGVESRVGQGSTFWFEIELALASLSGATPPAASVSALEVLLVEDVALNREVAQGLLERDGHRVMLAEDAGPALALCRQRRFDLILLDMHLPGMAGLELCAGIRRQLDGLNRATPIFAFTASIQPDMVRRYFAAGMQGVLGKPLRMDELRRALGEVGTSVPALAVDAALDRQMLETHRRLLGRHKLAGLLGNLLGSLDEQLPLLAEALDQADLAEAANIAHRLSGSCHSMGLVALGAGLGELEREALGAAGVDPRAWGARLGSLRRDGAEALRRAGFLGEADSAAG.

Disordered stretches follow at residues 27-82 (ERRP…HARA), 154-198 (RQAG…LPAG), and 224-245 (RQHP…RQPR). Residues 40-49 (GEAAVRRAGL) are compositionally biased toward low complexity. Residues 161–183 (HRLHRPRTTHRHAVRRAPGRRRE) are compositionally biased toward basic residues. A run of 2 helical transmembrane segments spans residues 264-284 (VLLF…FFEY) and 395-415 (ASLL…SWLF). Positions 417–473 (SLVTRHLWRMSEFAGHIAEGDLQQPLRLDKVDRERDEIDAVAAALEDMRQALRTDRR) constitute an HAMP domain. In terms of domain architecture, Histidine kinase spans 513–734 (TMSHEIRTPL…TFWFEIELAL (222 aa)). H516 carries the phosphohistidine; by autocatalysis modification. Residues 751–869 (EVLLVEDVAL…ELRRALGEVG (119 aa)) enclose the Response regulatory domain. D800 is subject to 4-aspartylphosphate. Positions 894-987 (GRHKLAGLLG…RDGAEALRRA (94 aa)) constitute an HPt domain. The residue at position 933 (H933) is a Phosphohistidine.

Autophosphorylated. Activation may require a sequential transfer of a phosphate group from a His in the primary transmitter domain, to an Asp in the receiver domain and to a His in the secondary transmitter domain.

It localises to the cell membrane. The catalysed reaction is ATP + protein L-histidine = ADP + protein N-phospho-L-histidine.. It participates in amino-acid degradation; L-arginine degradation [regulation]. In terms of biological role, member of the two-component regulatory system AruS/AruR, which is involved in the regulation of the arginine transaminase (ATA) pathway in response to exogeneous L-arginine. Probably functions as a sensor kinase that phosphorylates AruR. This chain is Sensor histidine kinase AruS (aruS), found in Pseudomonas aeruginosa (strain ATCC 15692 / DSM 22644 / CIP 104116 / JCM 14847 / LMG 12228 / 1C / PRS 101 / PAO1).